Here is a 74-residue protein sequence, read N- to C-terminus: MPKAGIHPRYEEARIVCGCGAIYETRSTKPGVTNVEICANCHPFFTGQQKIVDAEGRVDRFLKKYGNVQPRTKR.

The Zn(2+) site is built by Cys17, Cys19, Cys38, and Cys41.

Belongs to the bacterial ribosomal protein bL31 family. Type A subfamily. As to quaternary structure, part of the 50S ribosomal subunit. It depends on Zn(2+) as a cofactor.

Functionally, binds the 23S rRNA. The sequence is that of Large ribosomal subunit protein bL31 from Gloeobacter violaceus (strain ATCC 29082 / PCC 7421).